The following is a 206-amino-acid chain: Small ribosomal subunit protein uS4c (206 aa).

An S4 RNA-binding domain is found at 94–152 (MRLDNIVFRLGMAPTIPAARQLVNHRHILVNDFTVNIPSYSCKLGDKISVQKRFESKTN).

Belongs to the universal ribosomal protein uS4 family. In terms of assembly, part of the 30S ribosomal subunit. Contacts protein S5. The interaction surface between S4 and S5 is involved in control of translational fidelity.

Its subcellular location is the plastid. It localises to the chloroplast. One of the primary rRNA binding proteins, it binds directly to 16S rRNA where it nucleates assembly of the body of the 30S subunit. Its function is as follows. With S5 and S12 plays an important role in translational accuracy. This is Small ribosomal subunit protein uS4c (rps4) from Chara vulgaris (Common stonewort).